The chain runs to 503 residues: Cytochrome P450 71B6 (503 aa).

A helical membrane pass occupies residues 10–30; that stretch reads TELLPWLLLLLIPPLLIFFLL. Residue Cys446 coordinates heme.

This sequence belongs to the cytochrome P450 family. The cofactor is heme.

The protein localises to the membrane. This Arabidopsis thaliana (Mouse-ear cress) protein is Cytochrome P450 71B6 (CYP71B6).